We begin with the raw amino-acid sequence, 420 residues long: Senescence-associated protein SPA15, chloroplastic (420 aa).

Residues 1–68 (MAKPNGIIYS…YIATRGSSLR (68 aa)) constitute a chloroplast transit peptide. A disordered region spans residues 85–111 (EYRDSSDTSSMQGKDKDPASLGKSGTP).

It belongs to the ATA15/OSA15 family. As to expression, expressed in leaves.

It is found in the plastid. It localises to the chloroplast. Its function is as follows. May be involved in the regulation of leaf senescence. The protein is Senescence-associated protein SPA15, chloroplastic of Ipomoea batatas (Sweet potato).